A 391-amino-acid chain; its full sequence is Small ribosomal subunit protein bS1 (391 aa).

4 S1 motif domains span residues G16–R90, N108–K173, G194–K262, and N279–K348. The segment at V356–M381 is disordered.

It belongs to the bacterial ribosomal protein bS1 family.

Functionally, binds mRNA; thus facilitating recognition of the initiation point. It is needed to translate mRNA with a short Shine-Dalgarno (SD) purine-rich sequence. In Staphylococcus aureus (strain MRSA252), this protein is Small ribosomal subunit protein bS1 (rpsA).